A 176-amino-acid polypeptide reads, in one-letter code: Cytochrome b (176 aa).

3 helical membrane-spanning segments follow: residues 33-53 (FGSL…FLAM), 77-98 (WLLR…YLHV), and 113-133 (WNVG…GYVL). Positions 83 and 97 each coordinate heme b.

This sequence belongs to the cytochrome b family. In terms of assembly, the cytochrome bc1 complex contains 11 subunits: 3 respiratory subunits (MT-CYB, CYC1 and UQCRFS1), 2 core proteins (UQCRC1 and UQCRC2) and 6 low-molecular weight proteins (UQCRH/QCR6, UQCRB/QCR7, UQCRQ/QCR8, UQCR10/QCR9, UQCR11/QCR10 and a cleavage product of UQCRFS1). This cytochrome bc1 complex then forms a dimer. Heme b is required as a cofactor.

The protein localises to the mitochondrion inner membrane. Its function is as follows. Component of the ubiquinol-cytochrome c reductase complex (complex III or cytochrome b-c1 complex) that is part of the mitochondrial respiratory chain. The b-c1 complex mediates electron transfer from ubiquinol to cytochrome c. Contributes to the generation of a proton gradient across the mitochondrial membrane that is then used for ATP synthesis. In Mormopterus kalinowskii (Kalinowski's mastiff bat), this protein is Cytochrome b (MT-CYB).